The primary structure comprises 867 residues: Envelope glycoprotein gp160 (867 aa).

The N-terminal stretch at methionine 1–glutamate 31 is a signal peptide. At glutamine 32–isoleucine 695 the chain is on the extracellular side. A disulfide bridge connects residues cysteine 53 and cysteine 73. N-linked (GlcNAc...) asparagine; by host glycans are attached at residues asparagine 87, asparagine 135, asparagine 140, asparagine 143, asparagine 159, asparagine 163, asparagine 188, asparagine 189, asparagine 199, asparagine 209, asparagine 246, asparagine 253, asparagine 274, asparagine 288, and asparagine 307. Disulfide bonds link cysteine 118/cysteine 217, cysteine 125/cysteine 208, cysteine 130/cysteine 160, cysteine 230/cysteine 259, and cysteine 240/cysteine 251. Positions cysteine 130–asparagine 159 are V1. Residues cysteine 160 to cysteine 208 are V2. Residues cysteine 308–histidine 341 are V3. An intrachain disulfide couples cysteine 308 to cysteine 342. 3 N-linked (GlcNAc...) asparagine; by host glycosylation sites follow: asparagine 350, asparagine 366, and asparagine 372. Positions serine 374–histidine 384 are CD4-binding loop. Intrachain disulfides connect cysteine 388-cysteine 457 and cysteine 395-cysteine 430. A V4 region spans residues cysteine 395–cysteine 430. Residues asparagine 396, asparagine 402, asparagine 408, asparagine 412, asparagine 418, asparagine 423, asparagine 460, and asparagine 475 are each glycosylated (N-linked (GlcNAc...) asparagine; by host). V5 stretches follow at residues asparagine 473 to glycine 483 and asparagine 475 to glycine 483. Residues alanine 524 to alanine 544 are fusion peptide. The tract at residues lysine 585–leucine 603 is immunosuppression. Cysteines 609 and 615 form a disulfide. Residues asparagine 622, asparagine 627, asparagine 636, and asparagine 648 are each glycosylated (N-linked (GlcNAc...) asparagine; by host). A coiled-coil region spans residues arginine 644 to alanine 678. Positions glycine 673–arginine 694 are MPER; binding to GalCer. A helical transmembrane segment spans residues phenylalanine 696–valine 716. At asparagine 717–leucine 867 the chain is on the cytoplasmic side. The YXXL motif; contains endocytosis signal motif lies at tyrosine 723–leucine 726. Residues threonine 730–arginine 755 form a disordered region. Residue cysteine 775 is the site of S-palmitoyl cysteine; by host attachment. The Di-leucine internalization motif signature appears at leucine 866–leucine 867.

Belongs to the HIV-1 env protein family. In terms of assembly, the mature envelope protein (Env) consists of a homotrimer of non-covalently associated gp120-gp41 heterodimers. The resulting complex protrudes from the virus surface as a spike. There seems to be as few as 10 spikes on the average virion. Interacts with host CD4, CCR5 and CXCR4. Gp120 also interacts with the C-type lectins CD209/DC-SIGN and CLEC4M/DC-SIGNR (collectively referred to as DC-SIGN(R)). Gp120 and gp41 interact with GalCer. Gp120 interacts with host ITGA4/ITGB7 complex; on CD4+ T-cells, this interaction results in rapid activation of integrin ITGAL/LFA-1, which facilitates efficient cell-to-cell spreading of HIV-1. Gp120 interacts with cell-associated heparan sulfate; this interaction increases virus infectivity on permissive cells and may be involved in infection of CD4- cells. The mature envelope protein (Env) consists of a homotrimer of non-covalently associated gp120-gp41 heterodimers. The resulting complex protrudes from the virus surface as a spike. There seems to be as few as 10 spikes on the average virion. Post-translationally, highly glycosylated by host. The high number of glycan on the protein is reffered to as 'glycan shield' because it contributes to hide protein sequence from adaptive immune system. Palmitoylation of the transmembrane protein and of Env polyprotein (prior to its proteolytic cleavage) is essential for their association with host cell membrane lipid rafts. Palmitoylation is therefore required for envelope trafficking to classical lipid rafts, but not for viral replication. In terms of processing, specific enzymatic cleavages in vivo yield mature proteins. Envelope glycoproteins are synthesized as an inactive precursor that is heavily N-glycosylated and processed likely by host cell furin in the Golgi to yield the mature SU and TM proteins. The cleavage site between SU and TM requires the minimal sequence [KR]-X-[KR]-R. About 2 of the 9 disulfide bonds of gp41 are reduced by P4HB/PDI, following binding to CD4 receptor.

It localises to the virion membrane. The protein localises to the host cell membrane. Its subcellular location is the host endosome membrane. Oligomerizes in the host endoplasmic reticulum into predominantly trimers. In a second time, gp160 transits in the host Golgi, where glycosylation is completed. The precursor is then proteolytically cleaved in the trans-Golgi and thereby activated by cellular furin or furin-like proteases to produce gp120 and gp41. Functionally, attaches the virus to the host lymphoid cell by binding to the primary receptor CD4. This interaction induces a structural rearrangement creating a high affinity binding site for a chemokine coreceptor like CXCR4 and/or CCR5. Acts as a ligand for CD209/DC-SIGN and CLEC4M/DC-SIGNR, which are respectively found on dendritic cells (DCs), and on endothelial cells of liver sinusoids and lymph node sinuses. These interactions allow capture of viral particles at mucosal surfaces by these cells and subsequent transmission to permissive cells. HIV subverts the migration properties of dendritic cells to gain access to CD4+ T-cells in lymph nodes. Virus transmission to permissive T-cells occurs either in trans (without DCs infection, through viral capture and transmission), or in cis (following DCs productive infection, through the usual CD4-gp120 interaction), thereby inducing a robust infection. In trans infection, bound virions remain infectious over days and it is proposed that they are not degraded, but protected in non-lysosomal acidic organelles within the DCs close to the cell membrane thus contributing to the viral infectious potential during DCs' migration from the periphery to the lymphoid tissues. On arrival at lymphoid tissues, intact virions recycle back to DCs' cell surface allowing virus transmission to CD4+ T-cells. In terms of biological role, acts as a class I viral fusion protein. Under the current model, the protein has at least 3 conformational states: pre-fusion native state, pre-hairpin intermediate state, and post-fusion hairpin state. During fusion of viral and target intracellular membranes, the coiled coil regions (heptad repeats) assume a trimer-of-hairpins structure, positioning the fusion peptide in close proximity to the C-terminal region of the ectodomain. The formation of this structure appears to drive apposition and subsequent fusion of viral and target cell membranes. Complete fusion occurs in host cell endosomes and is dynamin-dependent, however some lipid transfer might occur at the plasma membrane. The virus undergoes clathrin-dependent internalization long before endosomal fusion, thus minimizing the surface exposure of conserved viral epitopes during fusion and reducing the efficacy of inhibitors targeting these epitopes. Membranes fusion leads to delivery of the nucleocapsid into the cytoplasm. In Homo sapiens (Human), this protein is Envelope glycoprotein gp160.